The following is a 487-amino-acid chain: Chromosomal replication initiator protein DnaA (487 aa).

The segment at 1–71 (MMHDALFERF…TSLVQSEDPD (71 aa)) is domain I, interacts with DnaA modulators. Positions 71 to 141 (DVLKVEILVR…QGGSGPLFGS (71 aa)) are domain II. Residues 142-364 (PLDTRFTFDT…GAFNQLMFRR (223 aa)) are domain III, AAA+ region. 4 residues coordinate ATP: glycine 188, glycine 190, lysine 191, and threonine 192. The interval 365 to 487 (SFEPNLSVDR…LKRLINENNA (123 aa)) is domain IV, binds dsDNA.

It belongs to the DnaA family. Oligomerizes as a right-handed, spiral filament on DNA at oriC.

It is found in the cytoplasm. In terms of biological role, plays an essential role in the initiation and regulation of chromosomal replication. ATP-DnaA binds to the origin of replication (oriC) to initiate formation of the DNA replication initiation complex once per cell cycle. Binds the DnaA box (a 9 base pair repeat at the origin) and separates the double-stranded (ds)DNA. Forms a right-handed helical filament on oriC DNA; dsDNA binds to the exterior of the filament while single-stranded (ss)DNA is stabiized in the filament's interior. The ATP-DnaA-oriC complex binds and stabilizes one strand of the AT-rich DNA unwinding element (DUE), permitting loading of DNA polymerase. After initiation quickly degrades to an ADP-DnaA complex that is not apt for DNA replication. Binds acidic phospholipids. The sequence is that of Chromosomal replication initiator protein DnaA from Agrobacterium fabrum (strain C58 / ATCC 33970) (Agrobacterium tumefaciens (strain C58)).